A 143-amino-acid chain; its full sequence is MPPKKKVAGLIKLQIKAGQATPAPPIGPALGQHGVNIMEFCKAYNAQTESQRGNVIPVEITVYEDRSFTFITKTPPAAELIKKAAGVEKGSGEPHVKKVANLTSAQVREIAEQKLQDLNAKDVDMAARIIAGTARSMGITVSD.

Belongs to the universal ribosomal protein uL11 family. In terms of assembly, part of the ribosomal stalk of the 50S ribosomal subunit. Interacts with L10 and the large rRNA to form the base of the stalk. L10 forms an elongated spine to which L12 dimers bind in a sequential fashion forming a multimeric L10(L12)X complex. One or more lysine residues are methylated.

Forms part of the ribosomal stalk which helps the ribosome interact with GTP-bound translation factors. In Kineococcus radiotolerans (strain ATCC BAA-149 / DSM 14245 / SRS30216), this protein is Large ribosomal subunit protein uL11.